A 569-amino-acid chain; its full sequence is 2-succinyl-5-enolpyruvyl-6-hydroxy-3-cyclohexene-1-carboxylate synthase (569 aa).

The protein belongs to the TPP enzyme family. MenD subfamily. As to quaternary structure, homodimer. Mg(2+) is required as a cofactor. Requires Mn(2+) as cofactor. Thiamine diphosphate serves as cofactor.

It catalyses the reaction isochorismate + 2-oxoglutarate + H(+) = 5-enolpyruvoyl-6-hydroxy-2-succinyl-cyclohex-3-ene-1-carboxylate + CO2. Its pathway is quinol/quinone metabolism; 1,4-dihydroxy-2-naphthoate biosynthesis; 1,4-dihydroxy-2-naphthoate from chorismate: step 2/7. The protein operates within quinol/quinone metabolism; menaquinone biosynthesis. Catalyzes the thiamine diphosphate-dependent decarboxylation of 2-oxoglutarate and the subsequent addition of the resulting succinic semialdehyde-thiamine pyrophosphate anion to isochorismate to yield 2-succinyl-5-enolpyruvyl-6-hydroxy-3-cyclohexene-1-carboxylate (SEPHCHC). This chain is 2-succinyl-5-enolpyruvyl-6-hydroxy-3-cyclohexene-1-carboxylate synthase, found in Shewanella halifaxensis (strain HAW-EB4).